Here is a 491-residue protein sequence, read N- to C-terminus: Glutamate--tRNA ligase (491 aa).

A 'HIGH' region motif is present at residues 13–23 (PSPTGFLHIGN). Zn(2+) contacts are provided by cysteine 110, cysteine 112, cysteine 137, and histidine 139. The 'KMSKS' region motif lies at 254-258 (KLSKR). Lysine 257 is an ATP binding site.

The protein belongs to the class-I aminoacyl-tRNA synthetase family. Glutamate--tRNA ligase type 1 subfamily. As to quaternary structure, monomer. The cofactor is Zn(2+).

The protein localises to the cytoplasm. It carries out the reaction tRNA(Glu) + L-glutamate + ATP = L-glutamyl-tRNA(Glu) + AMP + diphosphate. Its function is as follows. Catalyzes the attachment of glutamate to tRNA(Glu) in a two-step reaction: glutamate is first activated by ATP to form Glu-AMP and then transferred to the acceptor end of tRNA(Glu). The sequence is that of Glutamate--tRNA ligase from Listeria welshimeri serovar 6b (strain ATCC 35897 / DSM 20650 / CCUG 15529 / CIP 8149 / NCTC 11857 / SLCC 5334 / V8).